The following is a 174-amino-acid chain: Ribosome maturation factor RimM (174 aa).

Residues 99-172 enclose the PRC barrel domain; that stretch reads ADEFFYHDVI…RLVIRPIAGL (74 aa).

It belongs to the RimM family. Binds ribosomal protein uS19.

The protein localises to the cytoplasm. Functionally, an accessory protein needed during the final step in the assembly of 30S ribosomal subunit, possibly for assembly of the head region. Essential for efficient processing of 16S rRNA. May be needed both before and after RbfA during the maturation of 16S rRNA. It has affinity for free ribosomal 30S subunits but not for 70S ribosomes. The sequence is that of Ribosome maturation factor RimM from Chloroflexus aurantiacus (strain ATCC 29366 / DSM 635 / J-10-fl).